The primary structure comprises 281 residues: Digeranylgeranylglyceryl phosphate synthase (281 aa).

8 helical membrane-spanning segments follow: residues 7–27 (ILRP…ALIT), 32–52 (FSVL…NVIN), 72–91 (GRIS…ALAS), 95–117 (FYLG…YYAW), 128–148 (ITIS…LGEV), 193–213 (ISGV…PSLY), 214–234 (LLGI…AVFL), and 258–278 (VGMA…TALT).

This sequence belongs to the UbiA prenyltransferase family. DGGGP synthase subfamily. The cofactor is Mg(2+).

It is found in the cell membrane. It catalyses the reaction sn-3-O-(geranylgeranyl)glycerol 1-phosphate + (2E,6E,10E)-geranylgeranyl diphosphate = 2,3-bis-O-(geranylgeranyl)-sn-glycerol 1-phosphate + diphosphate. Its pathway is membrane lipid metabolism; glycerophospholipid metabolism. Functionally, prenyltransferase that catalyzes the transfer of the geranylgeranyl moiety of geranylgeranyl diphosphate (GGPP) to the C2 hydroxyl of (S)-3-O-geranylgeranylglyceryl phosphate (GGGP). This reaction is the second ether-bond-formation step in the biosynthesis of archaeal membrane lipids. In Methanothermobacter thermautotrophicus (strain ATCC 29096 / DSM 1053 / JCM 10044 / NBRC 100330 / Delta H) (Methanobacterium thermoautotrophicum), this protein is Digeranylgeranylglyceryl phosphate synthase.